A 347-amino-acid chain; its full sequence is Protein RecA (347 aa).

Residue 68–75 coordinates ATP; that stretch reads GPESSGKT.

This sequence belongs to the RecA family.

Its subcellular location is the cytoplasm. Its function is as follows. Can catalyze the hydrolysis of ATP in the presence of single-stranded DNA, the ATP-dependent uptake of single-stranded DNA by duplex DNA, and the ATP-dependent hybridization of homologous single-stranded DNAs. It interacts with LexA causing its activation and leading to its autocatalytic cleavage. The sequence is that of Protein RecA from Rhodococcus jostii (strain RHA1).